A 374-amino-acid chain; its full sequence is Anhydro-N-acetylmuramic acid kinase (374 aa).

Residue 12-19 participates in ATP binding; that stretch reads GTSLDGVD.

Belongs to the anhydro-N-acetylmuramic acid kinase family.

It catalyses the reaction 1,6-anhydro-N-acetyl-beta-muramate + ATP + H2O = N-acetyl-D-muramate 6-phosphate + ADP + H(+). Its pathway is amino-sugar metabolism; 1,6-anhydro-N-acetylmuramate degradation. It functions in the pathway cell wall biogenesis; peptidoglycan recycling. Functionally, catalyzes the specific phosphorylation of 1,6-anhydro-N-acetylmuramic acid (anhMurNAc) with the simultaneous cleavage of the 1,6-anhydro ring, generating MurNAc-6-P. Is required for the utilization of anhMurNAc either imported from the medium or derived from its own cell wall murein, and thus plays a role in cell wall recycling. In Escherichia fergusonii (strain ATCC 35469 / DSM 13698 / CCUG 18766 / IAM 14443 / JCM 21226 / LMG 7866 / NBRC 102419 / NCTC 12128 / CDC 0568-73), this protein is Anhydro-N-acetylmuramic acid kinase.